A 113-amino-acid polypeptide reads, in one-letter code: uncharacterized protein (113 aa).

This is an uncharacterized protein from Saccharomyces cerevisiae (strain ATCC 204508 / S288c) (Baker's yeast).